A 290-amino-acid polypeptide reads, in one-letter code: Tubulin polyglutamylase complex subunit 1 (290 aa).

Residues 1–30 (MAAVEKRRQAVPPPAGFTDSGRQSVSRAAG) are disordered. Residues Ser-34 and Ser-266 each carry the phosphoserine modification.

In terms of assembly, part of the neuronal tubulin polyglutamylase complex which contains TPGS1, TPGS2, TTLL1, LRRC49 and NICN1. Interacts with PCM1, CSTPP1 and LRRC49.

Its subcellular location is the cytoplasm. The protein resides in the cytoskeleton. It localises to the cilium axoneme. The protein localises to the flagellum axoneme. It is found in the cilium basal body. Its subcellular location is the flagellum basal body. The protein resides in the cell projection. It localises to the axon. The protein localises to the dendrite. It is found in the microtubule organizing center. Its subcellular location is the centrosome. The protein resides in the centriolar satellite. In terms of biological role, subunit of the tubulin polyglutamylase complex (TPGC). The complex mediates cilia and flagella polyglutamylation which is essential for their biogenesis and motility. May act in the targeting of the tubulin polyglutamylase complex. Required for the development of the spermatid flagellum. The protein is Tubulin polyglutamylase complex subunit 1 of Homo sapiens (Human).